Reading from the N-terminus, the 301-residue chain is Methionyl-tRNA formyltransferase (301 aa).

Residue 109–112 coordinates (6S)-5,6,7,8-tetrahydrofolate; sequence SLLP.

This sequence belongs to the Fmt family.

It carries out the reaction L-methionyl-tRNA(fMet) + (6R)-10-formyltetrahydrofolate = N-formyl-L-methionyl-tRNA(fMet) + (6S)-5,6,7,8-tetrahydrofolate + H(+). Its function is as follows. Attaches a formyl group to the free amino group of methionyl-tRNA(fMet). The formyl group appears to play a dual role in the initiator identity of N-formylmethionyl-tRNA by promoting its recognition by IF2 and preventing the misappropriation of this tRNA by the elongation apparatus. The chain is Methionyl-tRNA formyltransferase from Anaplasma marginale (strain St. Maries).